The following is a 241-amino-acid chain: MORN repeat-containing protein 3 (241 aa).

Positions 6–35 (CPRKVEPPWKGWDRKAQKNGLRHQVFAVNG) are interaction with MDM2. MORN repeat units follow at residues 38–60 (YVGE…KSGA), 62–84 (YEGD…DPET), 91–113 (YSGW…PKEY), 114–136 (YEGE…NGDI), 137–159 (YEGQ…NGNR), 160–182 (YEGI…DHGQ), and 184–205 (FEGY…GRDE). The interval 76-100 (SLSHPDPETGKLRRVYSGWWKGDKK) is interaction with SIRT1. The tract at residues 206–240 (APEPTQFPIPKVEILDPDGVLKEALDKLMKPEEEE) is interaction with TP53.

Interacts with MEIG1. Interacts with TP53, MDM2 and SIRT1; the interactions mediate post-transcriptional modifications of TP53 by MDM2 and SIRT1. In terms of tissue distribution, expressed in testis (at protein level).

The protein resides in the cytoplasmic vesicle. Its subcellular location is the secretory vesicle. The protein localises to the acrosome. Functionally, assembles a suppression complex (suppresome) by tethering SIRT1 and MDM2 to regulate composite modifications of p53/TP53. Confers both deacetylation-mediated functional inactivation, by SIRT1, and ubiquitination-dependent degradation, by MDM2, of p53/TP53, promoting a proliferative and cell survival behaviors. May play a role in the regulation of spermatogenesis. This chain is MORN repeat-containing protein 3 (Morn3), found in Mus musculus (Mouse).